A 142-amino-acid chain; its full sequence is Small ribosomal subunit protein uS11c (142 aa).

The protein belongs to the universal ribosomal protein uS11 family. As to quaternary structure, part of the 30S ribosomal subunit.

It localises to the plastid. Its subcellular location is the chloroplast. In Welwitschia mirabilis (Tree tumbo), this protein is Small ribosomal subunit protein uS11c.